Reading from the N-terminus, the 647-residue chain is MHLSDLAHPNELHGLSVAELQDVAKQIRERHLEVVSNSGGHLGPGLGVVELTLALYQTLDLDKDRVVWDVGHQAYPHKLITGRYADFDSLRQQGGVAGYLKRCESEFDHFGAGHASTSISAALGMAMARDRQGLDYKCVAVIGDGALTGGMALEAINHAGHMPNTPLLVVLNDNDMSISPPVGALSSHLNRMRLSPPMQFLSGSVEESMRHLPFMGGDLPPELNRLKESMRRLAVPKVGAVFEELGFTYMGPIDGHDMGEMIRTFQAAHRIGGPALVHVITKKGKGYPYAEADQVGYHAQSAFDLGTGKARPSKTPKPPSYSKVFGQTLVKICEQNSKVVGITAAMATGTGLDLLQKALPDQYVDVGIAEQHAVTLAAGMACDGLRPVVAIYSTFLQRAFDQMIHDVGIQNLPVTFVLDRAGIVGADGPTHQGQYDISYLRAIPNFTVMAPKDEAELQRMLVSSLQHSGPCAIRIPRGPGEGVPLMEEGWEPLPIGRGEVLRDGDDLLIVAYGAMNSKALATADLLASCGVQSTVVNARFLRPLDDELLHPLARRIGKVVTIEEGTLAGGFGSALTESLLDADIKPSILRLGIPDVLVDHATPQQSFEKLGLTPAQMAESIQGFLQRSKLTTATSVVQQPSVSVLES.

Residues His72 and 113–115 (GHA) each bind thiamine diphosphate. Asp144 is a binding site for Mg(2+). Thiamine diphosphate-binding positions include 145-146 (GA), Asn174, Tyr287, and Glu370. Asn174 provides a ligand contact to Mg(2+).

This sequence belongs to the transketolase family. DXPS subfamily. In terms of assembly, homodimer. Requires Mg(2+) as cofactor. Thiamine diphosphate serves as cofactor.

It catalyses the reaction D-glyceraldehyde 3-phosphate + pyruvate + H(+) = 1-deoxy-D-xylulose 5-phosphate + CO2. It functions in the pathway metabolic intermediate biosynthesis; 1-deoxy-D-xylulose 5-phosphate biosynthesis; 1-deoxy-D-xylulose 5-phosphate from D-glyceraldehyde 3-phosphate and pyruvate: step 1/1. Catalyzes the acyloin condensation reaction between C atoms 2 and 3 of pyruvate and glyceraldehyde 3-phosphate to yield 1-deoxy-D-xylulose-5-phosphate (DXP). The chain is 1-deoxy-D-xylulose-5-phosphate synthase from Synechococcus sp. (strain WH7803).